The primary structure comprises 308 residues: Cell division protein FtsX (308 aa).

The Extracellular segment spans residues 1–24 (MISRFFRHLFEALKSLKRNGWMTV). The helical transmembrane segment at 25 to 45 (AAVSSVMITLTLVAIFASVIF) threads the bilayer. Over 46 to 178 (NTAKLATDIE…NTERLFKLAS (133 aa)) the chain is Cytoplasmic. Residues 179 to 199 (FIRVWGLGIAALLIFIAAFLI) traverse the membrane as a helical segment. Residues 200–236 (SNTIRITIISRSREIQIMRLVGAKNSYIRGPFLLEGA) lie on the Extracellular side of the membrane. Residues 237 to 257 (FIGLLGAIAPSVLVFIVYQIV) traverse the membrane as a helical segment. Over 258 to 276 (YQSVNKSLVGQNLSMISPD) the chain is Cytoplasmic. Residues 277–297 (LFSPLMIALLFVIGVFIGSLG) form a helical membrane-spanning segment. Residues 298 to 308 (SGISMRRFLKI) are Extracellular-facing.

It belongs to the ABC-4 integral membrane protein family. FtsX subfamily. As to quaternary structure, interacts with FtsE. Interacts (via large extracellular loop) with PcsB (via N-terminal coiled coil domain). This interaction directs PcsB to equatorial and septal sites of dividing cells.

Its subcellular location is the cell membrane. Functionally, part of the ABC transporter FtsEX involved in asymmetric cellular division facilitating the initiation of sporulation. Required in maintaining normal growth and cellular morphology. The chain is Cell division protein FtsX from Streptococcus pneumoniae (strain ATCC BAA-255 / R6).